Here is a 62-residue protein sequence, read N- to C-terminus: Small ribosomal subunit protein eS27 (62 aa).

Positions 17, 20, 36, and 39 each coordinate Zn(2+). Residues 17–39 (CPDCENEQVVFERASTVVECTVC) form a C4-type zinc finger.

Belongs to the eukaryotic ribosomal protein eS27 family. In terms of assembly, part of the 30S ribosomal subunit. It depends on Zn(2+) as a cofactor.

The chain is Small ribosomal subunit protein eS27 from Methanoculleus marisnigri (strain ATCC 35101 / DSM 1498 / JR1).